Here is a 624-residue protein sequence, read N- to C-terminus: ATP-dependent RNA helicase MRH4, mitochondrial (624 aa).

Residues 1 to 43 (MSPVASTCLLCEMRTVVWGWQPAVPQPWHFVRFASSARLARRK) constitute a mitochondrion transit peptide. The disordered stretch occupies residues 41–120 (RRKPARMALS…KDAADKKQDG (80 aa)). Residues 86–119 (RLPDRPIPRSDAELKRSSSDLNNKEKDAADKKQD) show a composition bias toward basic and acidic residues. The Q motif motif lies at 151 to 184 (TSFDQFPLLPQVREAVYANAFPTLTEISPTPIQR). The Helicase ATP-binding domain maps to 212–427 (EEELFHFDQF…EKKFPEMKRL (216 aa)). 225 to 232 (AETGTGKT) lines the ATP pocket. Residues 374–377 (DEAD) carry the DEAD box motif. Residues 438–624 (RVQLGVVDVD…EAMFRGQALI (187 aa)) enclose the Helicase C-terminal domain.

This sequence belongs to the DEAD box helicase family. MRH4 subfamily.

Its subcellular location is the mitochondrion. It catalyses the reaction ATP + H2O = ADP + phosphate + H(+). Its function is as follows. ATP-binding RNA helicase involved in mitochondrial RNA metabolism. Required for maintenance of mitochondrial DNA. The protein is ATP-dependent RNA helicase MRH4, mitochondrial (MRH4) of Ajellomyces capsulatus (strain NAm1 / WU24) (Darling's disease fungus).